Here is a 122-residue protein sequence, read N- to C-terminus: Large ribosomal subunit protein uL29B (122 aa).

Residues 10–69 (QLGIKQIEERAAEIKAELAALRQKKNSGDVGANDIKTAKKNLARALTVRREKILEELVEA) are a coiled coil.

The protein belongs to the universal ribosomal protein uL29 family. In terms of assembly, component of the large ribosomal subunit.

It is found in the cytoplasm. This Encephalitozoon cuniculi (strain GB-M1) (Microsporidian parasite) protein is Large ribosomal subunit protein uL29B (RPL35C).